The chain runs to 435 residues: Serine--tRNA ligase (435 aa).

L-serine is bound at residue 242–244 (TAE). 273–275 (RSE) contacts ATP. Glu296 serves as a coordination point for L-serine. Position 360-363 (360-363 (EISS)) interacts with ATP. Ser396 serves as a coordination point for L-serine.

The protein belongs to the class-II aminoacyl-tRNA synthetase family. Type-1 seryl-tRNA synthetase subfamily. Homodimer. The tRNA molecule binds across the dimer.

The protein resides in the cytoplasm. It catalyses the reaction tRNA(Ser) + L-serine + ATP = L-seryl-tRNA(Ser) + AMP + diphosphate + H(+). The enzyme catalyses tRNA(Sec) + L-serine + ATP = L-seryl-tRNA(Sec) + AMP + diphosphate + H(+). It participates in aminoacyl-tRNA biosynthesis; selenocysteinyl-tRNA(Sec) biosynthesis; L-seryl-tRNA(Sec) from L-serine and tRNA(Sec): step 1/1. In terms of biological role, catalyzes the attachment of serine to tRNA(Ser). Is also able to aminoacylate tRNA(Sec) with serine, to form the misacylated tRNA L-seryl-tRNA(Sec), which will be further converted into selenocysteinyl-tRNA(Sec). This is Serine--tRNA ligase from Vibrio vulnificus (strain CMCP6).